A 225-amino-acid chain; its full sequence is C-reactive protein (225 aa).

An N-terminal signal peptide occupies residues 1–18 (MLVVFLCLLSVTLEATEG). The Pentraxin (PTX) domain occupies 23–225 (SGKVLQFKTA…TGNVLVATDN (203 aa)). A disulfide bridge links C54 with C116. Ca(2+) contacts are provided by D78, D157, P158, D159, and Q169.

This sequence belongs to the pentraxin family. Homotrimer. Requires Ca(2+) as cofactor.

The protein resides in the secreted. Displays several functions associated with host defense: it promotes agglutination, bacterial capsular swelling, phagocytosis, and complement fixation through its calcium-dependent binding to phosphorylcholine. The polypeptide is C-reactive protein (Danio rerio (Zebrafish)).